The sequence spans 284 residues: Bifunctional protein FolD 1 (284 aa).

NADP(+) is bound by residues 166 to 168 (GAS), serine 191, and isoleucine 232.

Belongs to the tetrahydrofolate dehydrogenase/cyclohydrolase family. In terms of assembly, homodimer.

It catalyses the reaction (6R)-5,10-methylene-5,6,7,8-tetrahydrofolate + NADP(+) = (6R)-5,10-methenyltetrahydrofolate + NADPH. The catalysed reaction is (6R)-5,10-methenyltetrahydrofolate + H2O = (6R)-10-formyltetrahydrofolate + H(+). It participates in one-carbon metabolism; tetrahydrofolate interconversion. Its function is as follows. Catalyzes the oxidation of 5,10-methylenetetrahydrofolate to 5,10-methenyltetrahydrofolate and then the hydrolysis of 5,10-methenyltetrahydrofolate to 10-formyltetrahydrofolate. This is Bifunctional protein FolD 1 from Hydrogenovibrio crunogenus (strain DSM 25203 / XCL-2) (Thiomicrospira crunogena).